The sequence spans 497 residues: Zinc metalloproteinase nas-28 (497 aa).

A signal peptide spans 1 to 14 (MFFPVVFFIPFVLG). Positions 15–120 (APTQKALEKI…IENGNYRSKR (106 aa)) are excised as a propeptide. An N-linked (GlcNAc...) asparagine glycan is attached at Asn-76. In terms of domain architecture, Peptidase M12A spans 121–319 (QAIVDTTNFW…IGVNKLYNCT (199 aa)). Cystine bridges form between Cys-164/Cys-318, Cys-185/Cys-206, Cys-328/Cys-339, Cys-331/Cys-342, Cys-344/Cys-353, Cys-364/Cys-398, and Cys-427/Cys-447. His-214 provides a ligand contact to Zn(2+). Glu-215 is a catalytic residue. Zn(2+) is bound by residues His-218 and His-224. Asn-317 carries an N-linked (GlcNAc...) asparagine glycan. Positions 324-354 (IQMKCSNCGITDSRNCNQCKCPRYFTGASCD) constitute an EGF-like domain. One can recognise a CUB domain in the interval 364–483 (CNGAVLQATS…LTFSIQYRAV (120 aa)). The N-linked (GlcNAc...) asparagine glycan is linked to Asn-394.

Zn(2+) is required as a cofactor.

Its subcellular location is the secreted. Metalloprotease. This is Zinc metalloproteinase nas-28 (nas-28) from Caenorhabditis elegans.